A 271-amino-acid chain; its full sequence is Formamidopyrimidine-DNA glycosylase (271 aa).

Residue proline 2 is the Schiff-base intermediate with DNA of the active site. The active-site Proton donor is glutamate 3. Lysine 57 serves as the catalytic Proton donor; for beta-elimination activity. Histidine 90, arginine 109, and lysine 151 together coordinate DNA. The FPG-type zinc-finger motif lies at 236–270 (HVYGRGGETCTQCGNLLSEIRLGQRTTVFCSICQP). Arginine 260 acts as the Proton donor; for delta-elimination activity in catalysis.

It belongs to the FPG family. In terms of assembly, monomer. It depends on Zn(2+) as a cofactor.

The enzyme catalyses Hydrolysis of DNA containing ring-opened 7-methylguanine residues, releasing 2,6-diamino-4-hydroxy-5-(N-methyl)formamidopyrimidine.. It carries out the reaction 2'-deoxyribonucleotide-(2'-deoxyribose 5'-phosphate)-2'-deoxyribonucleotide-DNA = a 3'-end 2'-deoxyribonucleotide-(2,3-dehydro-2,3-deoxyribose 5'-phosphate)-DNA + a 5'-end 5'-phospho-2'-deoxyribonucleoside-DNA + H(+). Involved in base excision repair of DNA damaged by oxidation or by mutagenic agents. Acts as a DNA glycosylase that recognizes and removes damaged bases. Has a preference for oxidized purines, such as 7,8-dihydro-8-oxoguanine (8-oxoG). Has AP (apurinic/apyrimidinic) lyase activity and introduces nicks in the DNA strand. Cleaves the DNA backbone by beta-delta elimination to generate a single-strand break at the site of the removed base with both 3'- and 5'-phosphates. The polypeptide is Formamidopyrimidine-DNA glycosylase (Shewanella oneidensis (strain ATCC 700550 / JCM 31522 / CIP 106686 / LMG 19005 / NCIMB 14063 / MR-1)).